Consider the following 861-residue polypeptide: Probable alpha,alpha-trehalose-phosphate synthase [UDP-forming] 10 (861 aa).

Ser-5 is subject to Phosphoserine. Thr-32 is subject to Phosphothreonine. The glycosyltransferase stretch occupies residues 59-546 (ERKIIVANFL…ARSFSQDLER (488 aa)).

It in the N-terminal section; belongs to the glycosyltransferase 20 family. In the C-terminal section; belongs to the trehalose phosphatase family.

It catalyses the reaction D-glucose 6-phosphate + UDP-alpha-D-glucose = alpha,alpha-trehalose 6-phosphate + UDP + H(+). In Arabidopsis thaliana (Mouse-ear cress), this protein is Probable alpha,alpha-trehalose-phosphate synthase [UDP-forming] 10 (TPS10).